The chain runs to 123 residues: Large ribosomal subunit protein eL8 (123 aa).

Belongs to the eukaryotic ribosomal protein eL8 family. In terms of assembly, part of the 50S ribosomal subunit. Probably part of the RNase P complex.

The protein resides in the cytoplasm. Its function is as follows. Multifunctional RNA-binding protein that recognizes the K-turn motif in ribosomal RNA, the RNA component of RNase P, box H/ACA, box C/D and box C'/D' sRNAs. The sequence is that of Large ribosomal subunit protein eL8 from Pyrococcus abyssi (strain GE5 / Orsay).